The following is a 236-amino-acid chain: Geranylgeranylglyceryl phosphate synthase (236 aa).

K13 provides a ligand contact to sn-glycerol 1-phosphate. Residues D15 and T42 each coordinate Mg(2+). Sn-glycerol 1-phosphate is bound by residues 161–166 (YVEYSG), G191, and 211–212 (GD).

This sequence belongs to the GGGP/HepGP synthase family. Group I subfamily. The cofactor is Mg(2+).

It localises to the cytoplasm. The enzyme catalyses sn-glycerol 1-phosphate + (2E,6E,10E)-geranylgeranyl diphosphate = sn-3-O-(geranylgeranyl)glycerol 1-phosphate + diphosphate. The protein operates within membrane lipid metabolism; glycerophospholipid metabolism. Functionally, prenyltransferase that catalyzes the transfer of the geranylgeranyl moiety of geranylgeranyl diphosphate (GGPP) to the C3 hydroxyl of sn-glycerol-1-phosphate (G1P). This reaction is the first ether-bond-formation step in the biosynthesis of archaeal membrane lipids. This chain is Geranylgeranylglyceryl phosphate synthase, found in Halobacterium salinarum (strain ATCC 700922 / JCM 11081 / NRC-1) (Halobacterium halobium).